We begin with the raw amino-acid sequence, 97 residues long: Small ribosomal subunit protein bS6 (97 aa).

Belongs to the bacterial ribosomal protein bS6 family.

Functionally, binds together with bS18 to 16S ribosomal RNA. The sequence is that of Small ribosomal subunit protein bS6 from Bifidobacterium longum (strain NCC 2705).